A 369-amino-acid polypeptide reads, in one-letter code: UDP-N-acetylglucosamine--N-acetylmuramyl-(pentapeptide) pyrophosphoryl-undecaprenol N-acetylglucosamine transferase (369 aa).

UDP-N-acetyl-alpha-D-glucosamine is bound by residues 10–12 (TGG), Asn124, Ser195, Ile252, and Gln297.

It belongs to the glycosyltransferase 28 family. MurG subfamily.

It is found in the cell membrane. The catalysed reaction is Mur2Ac(oyl-L-Ala-gamma-D-Glu-L-Lys-D-Ala-D-Ala)-di-trans,octa-cis-undecaprenyl diphosphate + UDP-N-acetyl-alpha-D-glucosamine = beta-D-GlcNAc-(1-&gt;4)-Mur2Ac(oyl-L-Ala-gamma-D-Glu-L-Lys-D-Ala-D-Ala)-di-trans,octa-cis-undecaprenyl diphosphate + UDP + H(+). The protein operates within cell wall biogenesis; peptidoglycan biosynthesis. Functionally, cell wall formation. Catalyzes the transfer of a GlcNAc subunit on undecaprenyl-pyrophosphoryl-MurNAc-pentapeptide (lipid intermediate I) to form undecaprenyl-pyrophosphoryl-MurNAc-(pentapeptide)GlcNAc (lipid intermediate II). This chain is UDP-N-acetylglucosamine--N-acetylmuramyl-(pentapeptide) pyrophosphoryl-undecaprenol N-acetylglucosamine transferase, found in Leuconostoc citreum (strain KM20).